A 709-amino-acid polypeptide reads, in one-letter code: Dual specificity calcium/calmodulin-dependent 3',5'-cyclic nucleotide phosphodiesterase 1C (709 aa).

The residue at position 1 (M1) is an N-acetylmethionine. A calmodulin-binding region spans residues 123–146 (EKPRFKSIVHAVQAGIFVERMYRR). In terms of domain architecture, PDEase spans 151–528 (VGLSYPPAVI…ERWRAKVPKE (378 aa)). Catalysis depends on H228, which acts as the Proton donor. 4 residues coordinate Zn(2+): H232, H268, D269, and D376. Position 269 (D269) interacts with Mg(2+). Disordered stretches follow at residues 453–495 (LIDE…APIN) and 523–650 (AKVP…TCRL). Positions 483 to 495 (VKTSGSEGSAPIN) are enriched in polar residues. The span at 523–556 (AKVPKEEKAKKEAEEKARLAAEEQQKEMEAKSQA) shows a compositional bias: basic and acidic residues. A compositionally biased stretch (polar residues) spans 571 to 581 (ETKNQVNGTRA). Composition is skewed to basic and acidic residues over residues 582–598 (NKSD…EKSS) and 606–633 (DFKD…DGTK).

The protein belongs to the cyclic nucleotide phosphodiesterase family. PDE1 subfamily. In terms of assembly, homodimer. Requires Zn(2+) as cofactor. Mg(2+) is required as a cofactor. As to expression, isoform PDE1C2 is present in the heart and brain and, at lower levels in the lung, liver, kidney and skeletal muscle. Isoform PDE1C1 is expressed in the heart and brain and, at lower levels in lung. Also expressed at low levels in uterus and testis.

It localises to the lysosome. The catalysed reaction is a nucleoside 3',5'-cyclic phosphate + H2O = a nucleoside 5'-phosphate + H(+). It carries out the reaction 3',5'-cyclic GMP + H2O = GMP + H(+). It catalyses the reaction 3',5'-cyclic AMP + H2O = AMP + H(+). With respect to regulation, type I PDE are activated by the binding of calmodulin in the presence of Ca(2+). Functionally, calmodulin-dependent cyclic nucleotide phosphodiesterase with a dual specificity for the second messengers cAMP and cGMP, which are key regulators of many important physiological processes. Has a high affinity for both cAMP and cGMP. Modulates the amplitude and duration of the cAMP signal in sensory cilia in response to odorant stimulation, hence contributing to the generation of action potentials. Regulates smooth muscle cell proliferation. Regulates the stability of growth factor receptors, including PDGFRB. In Homo sapiens (Human), this protein is Dual specificity calcium/calmodulin-dependent 3',5'-cyclic nucleotide phosphodiesterase 1C.